The following is a 115-amino-acid chain: Phosphoribosyl-AMP cyclohydrolase (115 aa).

Aspartate 80 contributes to the Mg(2+) binding site. Cysteine 81 provides a ligand contact to Zn(2+). Residues aspartate 82 and aspartate 84 each contribute to the Mg(2+) site. Zn(2+)-binding residues include cysteine 97 and cysteine 104.

Belongs to the PRA-CH family. Homodimer. Mg(2+) is required as a cofactor. Requires Zn(2+) as cofactor.

Its subcellular location is the cytoplasm. The catalysed reaction is 1-(5-phospho-beta-D-ribosyl)-5'-AMP + H2O = 1-(5-phospho-beta-D-ribosyl)-5-[(5-phospho-beta-D-ribosylamino)methylideneamino]imidazole-4-carboxamide. Its pathway is amino-acid biosynthesis; L-histidine biosynthesis; L-histidine from 5-phospho-alpha-D-ribose 1-diphosphate: step 3/9. Catalyzes the hydrolysis of the adenine ring of phosphoribosyl-AMP. The protein is Phosphoribosyl-AMP cyclohydrolase of Nocardia farcinica (strain IFM 10152).